The primary structure comprises 87 residues: Small ribosomal subunit protein bS20 (87 aa).

The protein belongs to the bacterial ribosomal protein bS20 family.

Its function is as follows. Binds directly to 16S ribosomal RNA. This chain is Small ribosomal subunit protein bS20, found in Clostridium perfringens (strain ATCC 13124 / DSM 756 / JCM 1290 / NCIMB 6125 / NCTC 8237 / Type A).